Reading from the N-terminus, the 1320-residue chain is MQDDSIEASTSISQLLRESYLAETRHRGNNERSRAEPSSNPCHFGSPSGAAEGGGGQDDLPDLSAFLSQEELDESVNLARLAINYDPLEKADETQARKRLSPDQMKHSPNLSFEPNFCQDNPRSPTSSKESPQEAKRPQYCSETQSKKVFLNKAADFIEELSSLFKSHSSKRIRPRACKNHKSKLESQNKVMQENSSSFSDLSERRERSSVPIPIPADTRDNEVNHALEQQEAKRREAEQAASEAAGGDTTPGSSPSSLYYEEPLGQPPRFTQKLRSREVPEGTRVQLDCIVVGIPPPQVRWYCEGKELENSPDIHIVQAGNLHSLTIAEAFEEDTGRYSCFASNIYGTDSTSAEIYIEGVSSSDSEGDPNKEEMNRIQKPNEVSSPPTTSAVIPPAVPQAQHLVAQPRVATIQQCQSPTNYLQGLDGKPIIAAPVFTKMLQNLSASEGQLVVFECRVKGAPSPKVEWYREGTLIEDSPDFRILQKKPRSMAEPEEICTLVIAEVFAEDSGCFTCTASNKYGTVSSIAQLHVRGNEDLSNNGSLHSANSTTNLAAIEPQPSPPHSEPPSVEQPPKPKLEGVLVNHNEPRSSSRIGLRVHFNLPEDDKGSEASSEAGVVTTRQTRPDSFQERFNGQATKTPEPSSPVKEPPPVLAKPKLDSTQLQQLHNQVLLEQHQLQNPPPSSPKEFPFSMTVLNSNAPPAVTTSSKQVKAPSSQTFSLARPKYFFPSTNTTAATVAPSSSPVFTLSSTPQTIQRTVSKESLLVSHPSVQTKSPGGLSIQNEPLPPGPTEPTPPPFTFSIPSGNQFQPRCVSPIPVSPTSRIQNPVAFLSSVLPSLPAIPPTNAMGLPRSAPSMPSQGLAKKNTKSPQPVNDDNIRETKNAVIRDLGKKITFSDVRPNQQEYKISSFEQRLMNEIEFRLERTPVDESDDEIQHDEIPTGKCIAPIFDKRLKHFRVTEGSPVTFTCKIVGIPVPKVYWFKDGKQISKRNEHCKMRREGDGTCSLHIESTTSDDDGNYTIMAANPQGRISCSGHLMVQSLPIRSRLTSAGQSHRGRSRVQERDKEPLQERFFRPHFLQAPGDMVAHEGRLCRLDCKVSGLPPPELTWLLNGQPVLPDASHKMLVRETGVHSLLIDPLTQRDAGTYKCIATNKTGQNSFSLELSVVAKEVKKAPVILEKLQNCGVPEGHPVRLECRVIGMPPPVFYWKKDNETIPCTRERISMHQDTTGYACLLIQPAKKSDAGWYTLSAKNEAGIVSCTARLDIYAQWHHQIPPPMSVRPSGSRYGSLTSKGLDIFSAFSSMESTMVYSCSSRSVVESDEL.

The interaction with CARP stretch occupies residues 1–522; that stretch reads MQDDSIEAST…FTCTASNKYG (522 aa). Disordered regions lie at residues 19 to 68, 84 to 145, and 165 to 271; these read SYLA…AFLS, NYDP…SETQ, and FKSH…PPRF. 2 stretches are compositionally biased toward basic and acidic residues: residues 23–35 and 87–106; these read ETRH…RSRA and PLEK…DQMK. Residue Ser-101 is modified to Phosphoserine. Positions 107 to 130 are enriched in polar residues; sequence HSPNLSFEPNFCQDNPRSPTSSKE. A Phosphoserine modification is found at Ser-131. Residues 168 to 182 show a composition bias toward basic residues; that stretch reads HSSKRIRPRACKNHK. The segment covering 186-201 has biased composition (polar residues); that stretch reads ESQNKVMQENSSSFSD. The segment covering 218–239 has biased composition (basic and acidic residues); sequence DTRDNEVNHALEQQEAKRREAE. Residues 219 to 248 are a coiled coil; that stretch reads TRDNEVNHALEQQEAKRREAEQAASEAAGG. The segment covering 240-258 has biased composition (low complexity); sequence QAASEAAGGDTTPGSSPSS. Residue Thr-251 is modified to Phosphothreonine. Ig-like domains are found at residues 269–359 and 435–531; these read PRFT…IYIE and PVFT…AQLH. Disulfide bonds link Cys-290-Cys-341 and Cys-456-Cys-515. The disordered stretch occupies residues 554-655; the sequence is AAIEPQPSPP…VKEPPPVLAK (102 aa). The span at 559–575 shows a compositional bias: pro residues; that stretch reads QPSPPHSEPPSVEQPPK. Residue Ser-644 is modified to Phosphoserine. Residues 649 to 677 are interaction with NEB; the sequence is PPPVLAKPKLDSTQLQQLHNQVLLEQHQL. Ser-759 carries the post-translational modification Phosphoserine. Residues 763 to 805 form a disordered region; the sequence is LLVSHPSVQTKSPGGLSIQNEPLPPGPTEPTPPPFTFSIPSGN. Over residues 768–782 the composition is skewed to polar residues; it reads PSVQTKSPGGLSIQN. The segment covering 784-797 has biased composition (pro residues); it reads PLPPGPTEPTPPPF. Ser-813, Ser-818, Ser-867, Ser-907, and Ser-928 each carry phosphoserine. The interval 844–876 is disordered; that stretch reads NAMGLPRSAPSMPSQGLAKKNTKSPQPVNDDNI. Ig-like domains follow at residues 945–1029, 1073–1162, and 1172–1262; these read PIFD…GRIS, PHFL…LELS, and PVIL…ARLD. Positions 945–1320 are interaction with ACTN; it reads PIFDKRLKHF…SRSVVESDEL (376 aa). Cys-1094 and Cys-1146 are disulfide-bonded.

This sequence belongs to the myotilin/palladin family. As to quaternary structure, interacts with TTN/titin, NEB, NEBL, ACTN2 and CARP. As to expression, expressed in adult skeletal muscle and fetal heart.

It localises to the cytoplasm. Its subcellular location is the nucleus. The protein localises to the myofibril. It is found in the sarcomere. The protein resides in the z line. Functionally, component of the sarcomere that tethers together nebulin (skeletal muscle) and nebulette (cardiac muscle) to alpha-actinin, at the Z lines. This chain is Myopalladin (MYPN), found in Homo sapiens (Human).